The chain runs to 177 residues: Large ribosomal subunit protein uL6 (177 aa).

Belongs to the universal ribosomal protein uL6 family. As to quaternary structure, part of the 50S ribosomal subunit.

In terms of biological role, this protein binds to the 23S rRNA, and is important in its secondary structure. It is located near the subunit interface in the base of the L7/L12 stalk, and near the tRNA binding site of the peptidyltransferase center. This is Large ribosomal subunit protein uL6 from Chelativorans sp. (strain BNC1).